A 340-amino-acid polypeptide reads, in one-letter code: Uroporphyrinogen decarboxylase (340 aa).

Substrate contacts are provided by residues 21–25 (RQAGR), Phe-40, Asp-71, Tyr-148, Ser-203, and His-316.

This sequence belongs to the uroporphyrinogen decarboxylase family. Homodimer.

It is found in the cytoplasm. The enzyme catalyses uroporphyrinogen III + 4 H(+) = coproporphyrinogen III + 4 CO2. Its pathway is porphyrin-containing compound metabolism; protoporphyrin-IX biosynthesis; coproporphyrinogen-III from 5-aminolevulinate: step 4/4. Functionally, catalyzes the decarboxylation of four acetate groups of uroporphyrinogen-III to yield coproporphyrinogen-III. The chain is Uroporphyrinogen decarboxylase from Campylobacter jejuni subsp. jejuni serotype O:2 (strain ATCC 700819 / NCTC 11168).